Reading from the N-terminus, the 679-residue chain is Altered inheritance of mitochondria protein 21 (679 aa).

Positions 1–85 (MPSEVTPKVP…LQRPVRRSTT (85 aa)) are disordered. The span at 9 to 19 (VPERPSRRKTS) shows a compositional bias: basic and acidic residues. Threonine 18 bears the Phosphothreonine mark. Serine 36 carries the post-translational modification Phosphoserine. Phosphothreonine is present on threonine 58. Serine 70 is modified (phosphoserine). At threonine 85 the chain carries Phosphothreonine. Serine 104 bears the Phosphoserine mark. Over residues 110 to 119 (NIHNVSRKKS) the composition is skewed to basic residues. Disordered stretches follow at residues 110–522 (NIHN…EKIE), 549–580 (IDTTPGEQAERALDEKSKSIPEEQREQSPNKM), and 593–679 (EKLP…FHSL). Polar residues-rich tracts occupy residues 133–149 (QNGQRSASDNKTSTNPS) and 164–178 (SAISPSNLVNKSNNE). A compositionally biased stretch (basic and acidic residues) spans 179 to 213 (VTEHSDSEDLTEKQKVHAALDNEAGDRSHFEEKLI). Residues serine 183, serine 206, and serine 231 each carry the phosphoserine modification. Basic and acidic residues predominate over residues 243–272 (SDDKAEKFTKHPESSLEELQKHQEQQEEKI). Threonine 277 bears the Phosphothreonine mark. At serine 284 the chain carries Phosphoserine. Residues 296 to 323 (EVNSQPQGPSDTETVIAATSSNVPSQIA) show a composition bias toward polar residues. Phosphoserine is present on serine 324. Basic and acidic residues-rich tracts occupy residues 339-361 (KKDFEAHVQKEELPNTQEKRVSE) and 372-383 (EESKIPKIPSER). Residues 383–396 (RPKRRAPPPVPKKP) are interaction with SH3 domain of ABP1. Polar residues-rich tracts occupy residues 414–427 (DLHNNGNSSATTAS) and 437–452 (SSITSDTTKADFTSKL). Residues 471–482 (LEKKLSSPDTES) show a composition bias toward basic and acidic residues. Residues 501 to 512 (RRGRGPRGRKLP) are compositionally biased toward basic residues. A Phosphothreonine modification is found at threonine 552. Residues 556-576 (QAERALDEKSKSIPEEQREQS) show a composition bias toward basic and acidic residues. Position 576 is a phosphoserine (serine 576). The segment covering 603–613 (PLSQLPQTNAV) has biased composition (polar residues). Phosphoserine occurs at positions 620, 623, 625, 627, 667, 671, 675, and 678. Positions 667–679 (SALHSEEASFHSL) are enriched in basic and acidic residues.

The protein belongs to the AIM21 family. Interacts with ribosomes. Interacts with ABP1.

The protein localises to the cytoplasm. Its subcellular location is the cytoskeleton. It localises to the actin patch. In terms of biological role, involved in mitochondrial migration along actin filaments. This is Altered inheritance of mitochondria protein 21 (AIM21) from Saccharomyces cerevisiae (strain ATCC 204508 / S288c) (Baker's yeast).